Reading from the N-terminus, the 198-residue chain is Imidazole glycerol phosphate synthase subunit HisH (198 aa).

The Glutamine amidotransferase type-1 domain occupies 1 to 194 (MIAIIDYGLG…LKGGFQDDQT (194 aa)). Residue cysteine 77 is the Nucleophile of the active site. Active-site residues include histidine 169 and glutamate 171.

Heterodimer of HisH and HisF.

Its subcellular location is the cytoplasm. It carries out the reaction 5-[(5-phospho-1-deoxy-D-ribulos-1-ylimino)methylamino]-1-(5-phospho-beta-D-ribosyl)imidazole-4-carboxamide + L-glutamine = D-erythro-1-(imidazol-4-yl)glycerol 3-phosphate + 5-amino-1-(5-phospho-beta-D-ribosyl)imidazole-4-carboxamide + L-glutamate + H(+). It catalyses the reaction L-glutamine + H2O = L-glutamate + NH4(+). It participates in amino-acid biosynthesis; L-histidine biosynthesis; L-histidine from 5-phospho-alpha-D-ribose 1-diphosphate: step 5/9. In terms of biological role, IGPS catalyzes the conversion of PRFAR and glutamine to IGP, AICAR and glutamate. The HisH subunit catalyzes the hydrolysis of glutamine to glutamate and ammonia as part of the synthesis of IGP and AICAR. The resulting ammonia molecule is channeled to the active site of HisF. The chain is Imidazole glycerol phosphate synthase subunit HisH from Staphylococcus saprophyticus subsp. saprophyticus (strain ATCC 15305 / DSM 20229 / NCIMB 8711 / NCTC 7292 / S-41).